A 252-amino-acid polypeptide reads, in one-letter code: Imidazole glycerol phosphate synthase subunit HisF (252 aa).

Residues Asp11 and Asp130 contribute to the active site.

The protein belongs to the HisA/HisF family. As to quaternary structure, heterodimer of HisH and HisF.

Its subcellular location is the cytoplasm. The catalysed reaction is 5-[(5-phospho-1-deoxy-D-ribulos-1-ylimino)methylamino]-1-(5-phospho-beta-D-ribosyl)imidazole-4-carboxamide + L-glutamine = D-erythro-1-(imidazol-4-yl)glycerol 3-phosphate + 5-amino-1-(5-phospho-beta-D-ribosyl)imidazole-4-carboxamide + L-glutamate + H(+). Its pathway is amino-acid biosynthesis; L-histidine biosynthesis; L-histidine from 5-phospho-alpha-D-ribose 1-diphosphate: step 5/9. In terms of biological role, IGPS catalyzes the conversion of PRFAR and glutamine to IGP, AICAR and glutamate. The HisF subunit catalyzes the cyclization activity that produces IGP and AICAR from PRFAR using the ammonia provided by the HisH subunit. This is Imidazole glycerol phosphate synthase subunit HisF from Thermococcus onnurineus (strain NA1).